We begin with the raw amino-acid sequence, 396 residues long: Mitogen-activated protein kinase mpkC (396 aa).

The region spanning 20–299 (YSDLQPVGLG…AAKALEHPYL (280 aa)) is the Protein kinase domain. Residues 26–34 (VGLGAFGLV) and K49 contribute to the ATP site. D141 (proton acceptor) is an active-site residue. A Phosphothreonine modification is found at T171. The TXY signature appears at 171-173 (TGY). Y173 bears the Phosphotyrosine mark.

Belongs to the protein kinase superfamily. Ser/Thr protein kinase family. MAP kinase subfamily. HOG1 sub-subfamily. It depends on Mg(2+) as a cofactor. Post-translationally, dually phosphorylated on Thr-171 and Tyr-173, which activates the enzyme.

The catalysed reaction is L-seryl-[protein] + ATP = O-phospho-L-seryl-[protein] + ADP + H(+). It catalyses the reaction L-threonyl-[protein] + ATP = O-phospho-L-threonyl-[protein] + ADP + H(+). Its activity is regulated as follows. Activated by tyrosine and threonine phosphorylation. Its function is as follows. Mitogen-activated protein kinase required for growth on media where sorbitol or mannitol is the sole carbon source. The sequence is that of Mitogen-activated protein kinase mpkC (mpkC) from Aspergillus niger (strain ATCC MYA-4892 / CBS 513.88 / FGSC A1513).